A 276-amino-acid polypeptide reads, in one-letter code: Large ribosomal subunit protein uL2 (276 aa).

Residues 212–276 (NRHRGIRPQT…KLIISRKKHK (65 aa)) are disordered. Residues 257–276 (YKTRKKKASDKLIISRKKHK) show a composition bias toward basic residues.

It belongs to the universal ribosomal protein uL2 family. In terms of assembly, part of the 50S ribosomal subunit. Forms a bridge to the 30S subunit in the 70S ribosome.

Functionally, one of the primary rRNA binding proteins. Required for association of the 30S and 50S subunits to form the 70S ribosome, for tRNA binding and peptide bond formation. It has been suggested to have peptidyltransferase activity; this is somewhat controversial. Makes several contacts with the 16S rRNA in the 70S ribosome. This Helicobacter acinonychis (strain Sheeba) protein is Large ribosomal subunit protein uL2.